We begin with the raw amino-acid sequence, 1117 residues long: MSAPVFFNPYLCGGAARRRNGCSTVDSRRGNGPTKKGKKSFLQVVPRGVIYDGEKGLIKKVTQHPPRMFYNNVQYLLEPQMSWPTLPCRETCRVGCGREQPLRFHTFDQIDSTVYADSVEQIFLGYRRHVVPCGNVIRMFGRTCDGSSVCVNVFGQPSYFYCEYDGSEGYLDNYLSTVLKETEDVTKIVFTLDAQRVHKYSLFGYNTKYIENLYRVTLNNWPVCKRLAQNLQSRGLRVYEAGVDPVARFCVDRKIPSFGWCVIKRFYARSSGLASFCDIEIDCEIGDVEADDSDMSWPEYRCASFDIECMSGGDRFPDSSMVDDIVIQISVICYAVGRSGAESDGVSGAEAAVREHQHLFTLGPCAPIPGTHVYEFPSEYELLLGFFIFFKAYSPDILTGYNINLFDIKYLLQRMEKIYHANVSEFTKLRFGGRFSIYVPVGNKPRNASSASIKVHCTGTVVLDMYPVCVAKTSAPNYKLETMAEMYLNEHKDDLSYKEIPPTFLANDNGRAVVGRYCIKDALLVKRLFEKLNYHYEAASVARLARIPLRSVIFEGQQIRIYSCILEEAGERNMILPSFLTAKRPGELATESSPVASFEEDSEQTSDSSLGEVSSQGSSDGGVGYQGATVLEPDVGFYDTPVAVFDFASLYPSIIMRHNLCYSTYLPLGRDDGLSDDDVFLLEFDDGTRYGFVREHVRKSILGELLARWLAKRKSVRKVLAECQDEVEKLILDKYQLALKVTCNAFYGFTGVSSGMMPCLPIAAAITRIGRDMLMSVVDYVNTYMGHAEFWLRYLGEEDLTGDALNVKVIYGDTDSVFVICGGVKCGSVLEHGEAIAGHITRALFREPIKLEFEKVFVNLMMICKKRYVGRIYGQTKLSMKGIELVRKTACEYVKSTVRNVLNMIFFEDDVSAGAVELSRMTMDDVKRHGVPSGFYRIVEALSNARDELYLNRVDVKKLVLSASLSQEVSAYKQQNLPHLRVIQRLAARREELPSVGDRVPYVLIAPPPGSSKNVPNYEISEDPGYVIEHKLPVNGEKYFEHVVKTVTNVLGPIIPKDCARKEKFLSYVLPQRVYVSRPFMPYACAANELVVACDDGGVMMGVYGIKPVMCGVSVTN.

Positions 591 to 621 (ESSPVASFEEDSEQTSDSSLGEVSSQGSSDG) are disordered. Positions 606–618 (SDSSLGEVSSQGS) are enriched in low complexity.

This sequence belongs to the DNA polymerase type-B family.

The protein resides in the host nucleus. The catalysed reaction is DNA(n) + a 2'-deoxyribonucleoside 5'-triphosphate = DNA(n+1) + diphosphate. This Cavia porcellus (Guinea pig) protein is DNA polymerase.